We begin with the raw amino-acid sequence, 250 residues long: Adenosylcobinamide-GDP ribazoletransferase (250 aa).

Transmembrane regions (helical) follow at residues 32–52, 59–79, 113–133, 136–156, 185–205, and 230–250; these read KGIIYFPVVGGIIGALLMVAY, LAHSLSALLTVGFFVFLTGGL, GVLAMVFILLLKLYGIQGLGE, IYWGIILMPVMGRQAIVYGCY, LTFILAAMHLPSLIFALLLPI, and CELTEGCYLLFILLITGAGLF.

Belongs to the CobS family. The cofactor is Mg(2+).

The protein resides in the cell membrane. It carries out the reaction alpha-ribazole + adenosylcob(III)inamide-GDP = adenosylcob(III)alamin + GMP + H(+). The enzyme catalyses alpha-ribazole 5'-phosphate + adenosylcob(III)inamide-GDP = adenosylcob(III)alamin 5'-phosphate + GMP + H(+). The protein operates within cofactor biosynthesis; adenosylcobalamin biosynthesis; adenosylcobalamin from cob(II)yrinate a,c-diamide: step 7/7. Its function is as follows. Joins adenosylcobinamide-GDP and alpha-ribazole to generate adenosylcobalamin (Ado-cobalamin). Also synthesizes adenosylcobalamin 5'-phosphate from adenosylcobinamide-GDP and alpha-ribazole 5'-phosphate. This chain is Adenosylcobinamide-GDP ribazoletransferase, found in Alkaliphilus metalliredigens (strain QYMF).